The primary structure comprises 287 residues: Large ribosomal subunit protein uL5m (287 aa).

The transit peptide at Met-1 to Arg-18 directs the protein to the mitochondrion. Positions Asp-80 to Pro-89 are enriched in basic and acidic residues. Residues Asp-80–Asn-109 form a disordered region.

This sequence belongs to the universal ribosomal protein uL5 family. As to quaternary structure, component of the mitochondrial large ribosomal subunit (mt-LSU). Mature yeast 74S mitochondrial ribosomes consist of a small (37S) and a large (54S) subunit. The 37S small subunit contains a 15S ribosomal RNA (15S mt-rRNA) and at least 32 different proteins. The 54S large subunit contains a 21S rRNA (21S mt-rRNA) and at least 45 different proteins. Unlike bacterial L5, uL5m does not bind zinc.

It is found in the mitochondrion. Component of the mitochondrial ribosome (mitoribosome), a dedicated translation machinery responsible for the synthesis of mitochondrial genome-encoded proteins, including at least some of the essential transmembrane subunits of the mitochondrial respiratory chain. The mitoribosomes are attached to the mitochondrial inner membrane and translation products are cotranslationally integrated into the membrane. The protein is Large ribosomal subunit protein uL5m (mrpl7) of Schizosaccharomyces pombe (strain 972 / ATCC 24843) (Fission yeast).